A 231-amino-acid polypeptide reads, in one-letter code: LexA repressor (231 aa).

A DNA-binding region (H-T-H motif) is located at residues 26 to 46 (FEEMKEALDLKSKSGIHRLIG). Catalysis depends on for autocatalytic cleavage activity residues Ser152 and Lys190.

The protein belongs to the peptidase S24 family. In terms of assembly, homodimer.

The enzyme catalyses Hydrolysis of Ala-|-Gly bond in repressor LexA.. Functionally, represses a number of genes involved in the response to DNA damage (SOS response), including recA and lexA. In the presence of single-stranded DNA, RecA interacts with LexA causing an autocatalytic cleavage which disrupts the DNA-binding part of LexA, leading to derepression of the SOS regulon and eventually DNA repair. This is LexA repressor from Acidiphilium cryptum (strain JF-5).